Reading from the N-terminus, the 295-residue chain is MYRISQLMSTPVASSSRLEREYAGELSPTCIFPSFTCDSLDGYHSFECGSIDPLTGSHYTCRRSPRLLTNGYYIWTEDSFLCDKDGNITLNPSQTSVMYKENLVRIFRKKKRICHSFSSLFNLSTSKSWLHGSIFGDINSSPSEDNWLKGTRRLDTDHCNGNADDLDCSSLTDDWESGKMNAESVITSSSSHIISQPPGGNSHSLSLQSQLTASERFQENSSDHSETRLLQEVFFQAILLAVCLIISACARWFMGEILASVFTCSLMITVAYVKSLFLSLASYFKTTACARFVKI.

The next 2 helical transmembrane spans lie at 229-249 (LLQE…ISAC) and 253-273 (FMGE…VAYV).

This sequence belongs to the TMEM71 family.

It is found in the membrane. This chain is Transmembrane protein 71 (TMEM71), found in Homo sapiens (Human).